Reading from the N-terminus, the 235-residue chain is Effector CFEM1 (235 aa).

Positions 1 to 17 are cleaved as a signal peptide; the sequence is MKFSAPVLAIFLASASA. Residues 18–114 enclose the CFEM domain; sequence QSTAELAAQI…ASASASSSAS (97 aa). Intrachain disulfides connect C30-C72, C34-C67, C44-C51, and C53-C88. Position 48 (D48) interacts with heme. T211 carries the GPI-anchor amidated threonine lipid modification. Positions 212–235 are cleaved as a propeptide — removed in mature form; it reads AAGVKEEASFFIPAAVALFAVFAV.

It belongs to the RBT5 family.

Its subcellular location is the cell membrane. It localises to the secreted. The protein resides in the host cytoplasm. It is found in the host nucleus. The protein localises to the host cell membrane. Its function is as follows. Appears to function during host infection, and may play a role in suppressing the host immune response. This chain is Effector CFEM1, found in Marssonina brunnea f. sp. multigermtubi (strain MB_m1) (Marssonina leaf spot fungus).